The primary structure comprises 260 residues: Small ribosomal subunit protein uS2 (260 aa).

The span at 228 to 240 (RKETKAENAEEAM) shows a compositional bias: basic and acidic residues. The segment at 228-260 (RKETKAENAEEAMKQAAEAEAEAAAPAAEESAE) is disordered. A compositionally biased stretch (low complexity) spans 241–260 (KQAAEAEAEAAAPAAEESAE).

This sequence belongs to the universal ribosomal protein uS2 family.

The chain is Small ribosomal subunit protein uS2 from Oleidesulfovibrio alaskensis (strain ATCC BAA-1058 / DSM 17464 / G20) (Desulfovibrio alaskensis).